We begin with the raw amino-acid sequence, 343 residues long: L-threonine 3-dehydrogenase (343 aa).

Cys-38 serves as a coordination point for Zn(2+). Catalysis depends on charge relay system residues Thr-40 and His-43. Zn(2+)-binding residues include His-63, Glu-64, Cys-93, Cys-96, Cys-99, and Cys-107. NAD(+) contacts are provided by residues Ile-175, Asp-195, Arg-200, 262–264 (LGI), and 286–287 (IY).

This sequence belongs to the zinc-containing alcohol dehydrogenase family. As to quaternary structure, homotetramer. Zn(2+) is required as a cofactor.

The protein localises to the cytoplasm. The enzyme catalyses L-threonine + NAD(+) = (2S)-2-amino-3-oxobutanoate + NADH + H(+). The protein operates within amino-acid degradation; L-threonine degradation via oxydo-reductase pathway; glycine from L-threonine: step 1/2. In terms of biological role, catalyzes the NAD(+)-dependent oxidation of L-threonine to 2-amino-3-ketobutyrate. This is L-threonine 3-dehydrogenase from Burkholderia thailandensis (strain ATCC 700388 / DSM 13276 / CCUG 48851 / CIP 106301 / E264).